Consider the following 294-residue polypeptide: uncharacterized protein (294 aa).

The signal sequence occupies residues 1-19; it reads MFKRSLFILLLLAASLVKA.

This is an uncharacterized protein from Rickettsia felis (strain ATCC VR-1525 / URRWXCal2) (Rickettsia azadi).